Consider the following 62-residue polypeptide: MAAVCDICGKGPGFGMAVSHSHRRTHRRWNPNIQRVRALIGRGTYKRINVCTSCLKAGKVTR.

This sequence belongs to the bacterial ribosomal protein bL28 family.

The protein is Large ribosomal subunit protein bL28 of Acidothermus cellulolyticus (strain ATCC 43068 / DSM 8971 / 11B).